The chain runs to 185 residues: Large ribosomal subunit protein uL22 (185 aa).

Belongs to the universal ribosomal protein uL22 family. As to quaternary structure, part of the 50S ribosomal subunit.

Functionally, this protein binds specifically to 23S rRNA. It makes multiple contacts with different domains of the 23S rRNA in the assembled 50S subunit and ribosome. Its function is as follows. The globular domain of the protein is located near the polypeptide exit tunnel on the outside of the subunit, while an extended beta-hairpin is found that lines the wall of the exit tunnel in the center of the 70S ribosome. The polypeptide is Large ribosomal subunit protein uL22 (Pyrobaculum aerophilum (strain ATCC 51768 / DSM 7523 / JCM 9630 / CIP 104966 / NBRC 100827 / IM2)).